Consider the following 1168-residue polypeptide: Transcription-repair-coupling factor (1168 aa).

Residues 633 to 794 enclose the Helicase ATP-binding domain; sequence DMQKSRPMDR…MLGVRDLSVI (162 aa). Residue 646 to 653 coordinates ATP; the sequence is GDVGYGKT. The short motif at 747 to 750 is the DEEQ box element; it reads DEEQ. In terms of domain architecture, Helicase C-terminal spans 808-969; the sequence is VLEQNMSFIK…GFKIAMRDLN (162 aa).

The protein in the N-terminal section; belongs to the UvrB family. In the C-terminal section; belongs to the helicase family. RecG subfamily.

It is found in the cytoplasm. In terms of biological role, couples transcription and DNA repair by recognizing RNA polymerase (RNAP) stalled at DNA lesions. Mediates ATP-dependent release of RNAP and its truncated transcript from the DNA, and recruitment of nucleotide excision repair machinery to the damaged site. The chain is Transcription-repair-coupling factor from Staphylococcus aureus (strain Mu50 / ATCC 700699).